The sequence spans 693 residues: Polyribonucleotide nucleotidyltransferase (693 aa).

Residues aspartate 489 and aspartate 495 each coordinate Mg(2+). The KH domain occupies 556 to 615; that stretch reads PQIHVMNINPAKIKDVVGRGGATVKGIVEKTGAQIDTSDSGEVKVFAKDKKSMDMAVAMI. The region spanning 625–693 is the S1 motif domain; the sequence is GQVYKGKIVK…GRVKLSLVAR (69 aa).

It belongs to the polyribonucleotide nucleotidyltransferase family. Component of the RNA degradosome, which is a multiprotein complex involved in RNA processing and mRNA degradation. Mg(2+) is required as a cofactor.

Its subcellular location is the cytoplasm. The catalysed reaction is RNA(n+1) + phosphate = RNA(n) + a ribonucleoside 5'-diphosphate. Functionally, involved in mRNA degradation. Catalyzes the phosphorolysis of single-stranded polyribonucleotides processively in the 3'- to 5'-direction. In Francisella tularensis subsp. holarctica (strain OSU18), this protein is Polyribonucleotide nucleotidyltransferase.